The primary structure comprises 186 residues: MSEHNPYGTMHGTTIITVRKGGMVVMAGDGQVSLGQTVMKGNARKVRRIGKGEVIAGFAGATADAFTLLERLEKKLEQYPGQLMRAAVELAKDWRTDKYLRNLEAMMLVADKTVTLAITGNGDVLEPEHGTIAIGSGGNYALAAALALMDTEKSAEEVARKAMKIAADICVYTNENVLVETLESAN.

Residue threonine 13 is part of the active site. The Na(+) site is built by alanine 167, cysteine 170, and threonine 173.

The protein belongs to the peptidase T1B family. HslV subfamily. A double ring-shaped homohexamer of HslV is capped on each side by a ring-shaped HslU homohexamer. The assembly of the HslU/HslV complex is dependent on binding of ATP.

It localises to the cytoplasm. It carries out the reaction ATP-dependent cleavage of peptide bonds with broad specificity.. With respect to regulation, allosterically activated by HslU binding. In terms of biological role, protease subunit of a proteasome-like degradation complex believed to be a general protein degrading machinery. The sequence is that of ATP-dependent protease subunit HslV from Allorhizobium ampelinum (strain ATCC BAA-846 / DSM 112012 / S4) (Agrobacterium vitis (strain S4)).